We begin with the raw amino-acid sequence, 272 residues long: Small ribosomal subunit protein uS2 (272 aa).

The interval 238 to 272 (ASKEEQTEEAEEETLSSKYREQDFQEAKSGARGEK) is disordered. The segment covering 255-272 (KYREQDFQEAKSGARGEK) has biased composition (basic and acidic residues).

Belongs to the universal ribosomal protein uS2 family.

This chain is Small ribosomal subunit protein uS2, found in Protochlamydia amoebophila (strain UWE25).